A 157-amino-acid polypeptide reads, in one-letter code: MAFKIIEKQPQQIVSIRVVGPYHETIPKGFDQLSSLYTQYQIPGKDWLVLYWDNPETNPPAELRADVSLSVADDYVLPPELSDHLQLQVIPAGLYAVYHTRVSDDDYAKAWGELYNQHLPQSGYRPTEGACYEVYLNDGRADGYFDIDIYQSVEKDQ.

Belongs to the DNA gyrase inhibitor family. Interacts with DNA gyrase.

The protein localises to the cytoplasm. Its function is as follows. Inhibits the supercoiling activity of DNA gyrase. Acts by inhibiting DNA gyrase at an early step, prior to (or at the step of) binding of DNA by the gyrase. It protects cells against toxins that target DNA gyrase, by inhibiting activity of these toxins and reducing the formation of lethal double-strand breaks in the cell. This Yersinia enterocolitica serotype O:8 / biotype 1B (strain NCTC 13174 / 8081) protein is DNA gyrase inhibitor.